The sequence spans 135 residues: ATP synthase epsilon chain (135 aa).

The interval 84 to 107 (SLSEEKQSEEQKQRLERAKKALSS) is disordered. A compositionally biased stretch (basic and acidic residues) spans 86 to 102 (SEEKQSEEQKQRLERAK).

The protein belongs to the ATPase epsilon chain family. F-type ATPases have 2 components, CF(1) - the catalytic core - and CF(0) - the membrane proton channel. CF(1) has five subunits: alpha(3), beta(3), gamma(1), delta(1), epsilon(1). CF(0) has three main subunits: a, b and c.

Its subcellular location is the cell membrane. In terms of biological role, produces ATP from ADP in the presence of a proton gradient across the membrane. The protein is ATP synthase epsilon chain of Elusimicrobium minutum (strain Pei191).